The primary structure comprises 124 residues: Fluoride-specific ion channel FluC (124 aa).

Transmembrane regions (helical) follow at residues 5 to 25 (VYIALLGALGCLCRYFLSGLV), 32 to 52 (SFPYGTLAVNLIGAFLIGLVM), 67 to 87 (FAITIGFLGGLTTFSTFSFET), and 96 to 116 (LLIAFVNVLVSVVACLTCTWI). Na(+)-binding residues include Gly75 and Thr78.

Belongs to the fluoride channel Fluc/FEX (TC 1.A.43) family.

The protein resides in the cell inner membrane. The enzyme catalyses fluoride(in) = fluoride(out). Its activity is regulated as follows. Na(+) is not transported, but it plays an essential structural role and its presence is essential for fluoride channel function. In terms of biological role, fluoride-specific ion channel. Important for reducing fluoride concentration in the cell, thus reducing its toxicity. This Geobacter sp. (strain M21) protein is Fluoride-specific ion channel FluC.